The following is a 467-amino-acid chain: Regulator of nonsense transcripts 3B (467 aa).

Disordered regions lie at residues Met-1–Lys-30 and Arg-197–Glu-467. Composition is skewed to basic and acidic residues over residues Arg-197–Gly-389 and Arg-396–Pro-421. Over residues Arg-435–Gly-447 the composition is skewed to gly residues. Positions Ala-449 to Glu-467 are enriched in basic and acidic residues.

It belongs to the RENT3 family.

It localises to the nucleus. The protein resides in the cytoplasm. Involved in nonsense-mediated decay (NMD) of mRNAs containing premature stop codons by associating with the nuclear exon junction complex (EJC) and serving as link between the EJC core and NMD machinery. Recruits UPF2 at the cytoplasmic side of the nuclear envelope and the subsequent formation of an UPF1-UPF2-UPF3 surveillance complex (including UPF1 bound to release factors at the stalled ribosome) is believed to activate NMD. In cooperation with UPF2 stimulates both ATPase and RNA helicase activities of UPF1. Binds spliced mRNA upstream of exon-exon junctions. This chain is Regulator of nonsense transcripts 3B, found in Danio rerio (Zebrafish).